The sequence spans 680 residues: DNA-directed RNA polymerase subunit beta' (680 aa).

Zn(2+) is bound by residues C69, C71, C87, and C90. Mg(2+)-binding residues include D489, D491, and D493.

It belongs to the RNA polymerase beta' chain family. RpoC1 subfamily. In plastids the minimal PEP RNA polymerase catalytic core is composed of four subunits: alpha, beta, beta', and beta''. When a (nuclear-encoded) sigma factor is associated with the core the holoenzyme is formed, which can initiate transcription. The cofactor is Mg(2+). It depends on Zn(2+) as a cofactor.

It is found in the plastid. The protein resides in the chloroplast. The catalysed reaction is RNA(n) + a ribonucleoside 5'-triphosphate = RNA(n+1) + diphosphate. Its function is as follows. DNA-dependent RNA polymerase catalyzes the transcription of DNA into RNA using the four ribonucleoside triphosphates as substrates. In Amborella trichopoda, this protein is DNA-directed RNA polymerase subunit beta'.